The sequence spans 283 residues: Nucleotide-binding protein ABBFA_002973 (283 aa).

9–16 contacts ATP; that stretch reads GQSGSGKS. 59–62 serves as a coordination point for GTP; that stretch reads DVRS.

This sequence belongs to the RapZ-like family.

Displays ATPase and GTPase activities. This chain is Nucleotide-binding protein ABBFA_002973, found in Acinetobacter baumannii (strain AB307-0294).